Reading from the N-terminus, the 138-residue chain is Basic phospholipase A2 homolog Tbo-K49 (138 aa).

Residues 1 to 16 form the signal peptide; the sequence is MRTLWIMAVLLVGVEG. 6 disulfide bridges follow: Cys-42/Cys-131, Cys-44/Cys-60, Cys-59/Cys-111, Cys-65/Cys-138, Cys-66/Cys-104, and Cys-91/Cys-102. The interval 121-133 is important for membrane-damaging activities in eukaryotes and bacteria; heparin-binding; the sequence is KKERINTKIFCKK.

In terms of assembly, monomer. In terms of tissue distribution, expressed by the venom gland.

It is found in the secreted. Functionally, snake venom phospholipase A2 homolog that lacks catalytic activity. It induces local edema. Is myotoxic. A model of myotoxic mechanism has been proposed: an apo Lys49-PLA2 is activated by the entrance of a hydrophobic molecule (e.g. fatty acid) at the hydrophobic channel of the protein leading to a reorientation of a monomer. This reorientation causes a transition between 'inactive' to 'active' states, causing alignment of C-terminal and membrane-docking sites (MDoS) side-by-side and putting the membrane-disruption sites (MDiS) in the same plane, exposed to solvent and in a symmetric position for both monomers. The MDoS region stabilizes the toxin on membrane by the interaction of charged residues with phospholipid head groups. Subsequently, the MDiS region destabilizes the membrane with penetration of hydrophobic residues. This insertion causes a disorganization of the membrane, allowing an uncontrolled influx of ions (i.e. calcium and sodium), and eventually triggering irreversible intracellular alterations and cell death. This is Basic phospholipase A2 homolog Tbo-K49 from Craspedocephalus borneensis (Borneo pit viper).